Here is a 454-residue protein sequence, read N- to C-terminus: DNA primase small subunit (454 aa).

Active-site residues include E66, D131, and D133. The Mg(2+) site is built by D131 and D133. 2 residues coordinate Mn(2+): D131 and D133. Position 131–133 (131–133) interacts with a ribonucleoside 5'-triphosphate; the sequence is DID. Zn(2+) is bound by residues C143, C144, C150, and C153. A Zinc knuckle motif motif is present at residues 143-153; sequence CCSKTNICEKC. 182–188 provides a ligand contact to a ribonucleoside 5'-triphosphate; that stretch reads SGRRGIH. D333 is a Mg(2+) binding site. D333 serves as a coordination point for Mn(2+). 342-345 contacts a ribonucleoside 5'-triphosphate; the sequence is HLLK. Residues 385–420 are disordered; it reads DKNSQNDNGHGPTMETNTTENQKDNARGQSNKGHGF. 2 stretches are compositionally biased toward polar residues: residues 389–404 and 411–420; these read QNDN…NTTE and RGQSNKGHGF.

The protein belongs to the eukaryotic-type primase small subunit family. Heterodimer of a catalytic subunit spp1/pri1 and a regulatory subunit spp2/pri2, also known as the DNA primase complex. Component of the alpha DNA polymerase complex (also known as the alpha DNA polymerase-primase complex) consisting of four subunits: the catalytic subunit pol1, the accessory subunit spb70/pol12, and the primase complex subunits spp1/pri1 and spp2/pri2 respectively. Mg(2+) is required as a cofactor. Requires Mn(2+) as cofactor.

It is found in the nucleus. The enzyme catalyses ssDNA + n NTP = ssDNA/pppN(pN)n-1 hybrid + (n-1) diphosphate.. Catalytic subunit of the DNA primase complex and component of the DNA polymerase alpha complex (also known as the alpha DNA polymerase-primase complex - primosome/replisome) which play an essential role in the initiation of DNA synthesis. During the S phase of the cell cycle, the DNA polymerase alpha complex (composed of a catalytic subunit pol1, an accessory subunit spb70/pol12 and two primase subunits, the catalytic subunit spp1/pri1 and the regulatory subunit spp2/pri2) is recruited to DNA at the replicative forks. The primase subunit of the polymerase alpha complex initiates DNA synthesis by oligomerising short RNA primers on both leading and lagging strands. In Schizosaccharomyces pombe (strain 972 / ATCC 24843) (Fission yeast), this protein is DNA primase small subunit.